The following is a 389-amino-acid chain: Chalcone synthase 2 (389 aa).

Residue Cys164 is part of the active site.

The protein belongs to the thiolase-like superfamily. Chalcone/stilbene synthases family.

It carries out the reaction (E)-4-coumaroyl-CoA + 3 malonyl-CoA + 3 H(+) = 2',4,4',6'-tetrahydroxychalcone + 3 CO2 + 4 CoA. Its pathway is secondary metabolite biosynthesis; flavonoid biosynthesis. Its function is as follows. The primary product of this enzyme is 4,2',4',6'-tetrahydroxychalcone (also termed naringenin-chalcone or chalcone) which can under specific conditions spontaneously isomerize into naringenin. This Pisum sativum (Garden pea) protein is Chalcone synthase 2 (CHS2).